The primary structure comprises 507 residues: Histidine ammonia-lyase (507 aa).

Positions 141 to 143 (ASG) form a cross-link, 5-imidazolinone (Ala-Gly). Serine 142 is modified (2,3-didehydroalanine (Ser)).

This sequence belongs to the PAL/histidase family. Contains an active site 4-methylidene-imidazol-5-one (MIO), which is formed autocatalytically by cyclization and dehydration of residues Ala-Ser-Gly.

The protein resides in the cytoplasm. The enzyme catalyses L-histidine = trans-urocanate + NH4(+). It participates in amino-acid degradation; L-histidine degradation into L-glutamate; N-formimidoyl-L-glutamate from L-histidine: step 1/3. This is Histidine ammonia-lyase from Cereibacter sphaeroides (strain ATCC 17023 / DSM 158 / JCM 6121 / CCUG 31486 / LMG 2827 / NBRC 12203 / NCIMB 8253 / ATH 2.4.1.) (Rhodobacter sphaeroides).